A 105-amino-acid chain; its full sequence is U2-lycotoxin-Ls1d (105 aa).

The signal sequence occupies residues 1–17 (MIKYVLISALLVVAVYS). The propeptide occupies 18 to 41 (FTIEDNEDALLEEAEDELDTEEER). 4 cysteine pairs are disulfide-bonded: Cys51-Cys67, Cys58-Cys97, Cys60-Cys83, and Cys69-Cys81.

The protein belongs to the neurotoxin 04 (omega-agtx) family. 01 (type I omega-agtx) subfamily. Expressed by the venom gland.

It is found in the secreted. Insecticidal to house crickets. It induces an excitatory slow-onset impact that leads to irreversible spastic paralysis. It also modifies human voltage-gated potassium channel Kv1.5/KCNA5. Most likely, it binds to the voltage-sensing domain of the channel, suggesting it does not block the pore but prevents its opening at physiological membrane potentials. The recombinant peptide binds to the channel in an irreversible manner and slows down the hKv1.5 current activation kinetics. It is not toxic to mice, when intracranially injected (at 0.5 ug/g mouse). This is U2-lycotoxin-Ls1d from Lycosa singoriensis (Wolf spider).